The following is a 60-amino-acid chain: Mastoparan (60 aa).

The first 27 residues, 1–27 (MKDTILILFTAFIALLGFFGMSAEALA), serve as a signal peptide directing secretion. 4 AXPX repeats span residues 27–30 (ADPL), 31–34 (ADPS), 35–38 (AGPN), and 41–44 (ADPE). Residues 28–45 (DPLADPSAGPNAEADPEA) constitute a propeptide that is removed on maturation. Residue Leu59 is modified to Leucine amide.

It belongs to the MCD family. Mastoparan subfamily. In terms of tissue distribution, expressed by the venom gland.

It is found in the secreted. The protein resides in the target cell membrane. Its function is as follows. Mast cell degranulating peptide. Its mast cell degranulation activity may be related to the activation of G-protein coupled receptors in mast cells as well as interaction with other proteins located in cell endosomal membranes in the mast cells. Has a membranolytic activity on human glioblastoma multiforme cells (brain tumor cells) that leads to cell necrosis. The protein is Mastoparan of Vespa orientalis (Oriental hornet).